The chain runs to 668 residues: COBRA-like protein 11 (668 aa).

Residues 1–29 (MKKLRYVHLNLLLLLLPLINLQFPTLSLA) form the signal peptide. Asn-69, Asn-125, Asn-254, Asn-318, Asn-329, Asn-358, Asn-412, Asn-432, Asn-473, Asn-552, Asn-560, and Asn-579 each carry an N-linked (GlcNAc...) asparagine glycan. Ser-636 carries the GPI-anchor amidated serine lipid modification. The propeptide at 637 to 668 (SGMRLSGIRFLPSILLAITTFHAITDRLLTGV) is removed in mature form.

It belongs to the COBRA family. As to expression, mostly expressed in flowers, stamen, anthers and pollen, and, to a lower extent, possibly in roots, stems, leaves and siliques.

The protein localises to the cell membrane. Involved in the deposition of apical pectin cap and cellulose microfibrils in pollen tubes. Implicated in pollen tubes growth in the female transmitting tract of pistil and toward micropyles, via the perception of ovule guidance cues. The protein is COBRA-like protein 11 of Arabidopsis thaliana (Mouse-ear cress).